The chain runs to 491 residues: UDP-N-acetylmuramate--L-alanine ligase (491 aa).

Gly126 to Thr132 serves as a coordination point for ATP.

This sequence belongs to the MurCDEF family.

It is found in the cytoplasm. The catalysed reaction is UDP-N-acetyl-alpha-D-muramate + L-alanine + ATP = UDP-N-acetyl-alpha-D-muramoyl-L-alanine + ADP + phosphate + H(+). It participates in cell wall biogenesis; peptidoglycan biosynthesis. Cell wall formation. This chain is UDP-N-acetylmuramate--L-alanine ligase, found in Shigella boydii serotype 18 (strain CDC 3083-94 / BS512).